A 327-amino-acid chain; its full sequence is HTH-type transcriptional regulator EbgR (327 aa).

Residues 1 to 57 (MATLKDIAIEAGVSLATVSRVLNDDPTLNVKEETKHRILEIAEKLEYKTSSARKLQT) form the HTH lacI-type domain. Positions 4–23 (LKDIAIEAGVSLATVSRVLN) form a DNA-binding region, H-T-H motif.

Repressor for beta galactosidase alpha and beta subunits (ebgA and ebgC). Binds lactose as an inducer. In Escherichia coli (strain K12), this protein is HTH-type transcriptional regulator EbgR (ebgR).